A 408-amino-acid polypeptide reads, in one-letter code: Dual-specificity RNA methyltransferase RlmN (408 aa).

Glu-122 functions as the Proton acceptor in the catalytic mechanism. Residues 128-369 (EEDRGTLCIS…NRAGYASPIR (242 aa)) enclose the Radical SAM core domain. Cys-135 and Cys-380 are disulfide-bonded. 3 residues coordinate [4Fe-4S] cluster: Cys-142, Cys-146, and Cys-149. S-adenosyl-L-methionine-binding positions include 206 to 207 (GE), Ser-238, 260 to 262 (SLH), and Asn-337. Cys-380 serves as the catalytic S-methylcysteine intermediate.

It belongs to the radical SAM superfamily. RlmN family. Requires [4Fe-4S] cluster as cofactor.

It is found in the cytoplasm. It carries out the reaction adenosine(2503) in 23S rRNA + 2 reduced [2Fe-2S]-[ferredoxin] + 2 S-adenosyl-L-methionine = 2-methyladenosine(2503) in 23S rRNA + 5'-deoxyadenosine + L-methionine + 2 oxidized [2Fe-2S]-[ferredoxin] + S-adenosyl-L-homocysteine. The enzyme catalyses adenosine(37) in tRNA + 2 reduced [2Fe-2S]-[ferredoxin] + 2 S-adenosyl-L-methionine = 2-methyladenosine(37) in tRNA + 5'-deoxyadenosine + L-methionine + 2 oxidized [2Fe-2S]-[ferredoxin] + S-adenosyl-L-homocysteine. In terms of biological role, specifically methylates position 2 of adenine 2503 in 23S rRNA and position 2 of adenine 37 in tRNAs. m2A2503 modification seems to play a crucial role in the proofreading step occurring at the peptidyl transferase center and thus would serve to optimize ribosomal fidelity. This is Dual-specificity RNA methyltransferase RlmN from Chelativorans sp. (strain BNC1).